Reading from the N-terminus, the 313-residue chain is Probable GTP 3',8-cyclase (313 aa).

Residues 4–224 (RFGRSIEDLR…EIRSKHYRPR (221 aa)) form the Radical SAM core domain. Residue arginine 13 coordinates GTP. The [4Fe-4S] cluster site is built by cysteine 20, cysteine 24, and cysteine 27. GTP is bound at residue lysine 60. Glycine 64 lines the S-adenosyl-L-methionine pocket. Threonine 90 contacts GTP. An S-adenosyl-L-methionine-binding site is contributed by serine 114. Residue lysine 151 coordinates GTP. [4Fe-4S] cluster contacts are provided by cysteine 244 and cysteine 247. 249–251 (RIR) provides a ligand contact to GTP. Cysteine 261 serves as a coordination point for [4Fe-4S] cluster.

Belongs to the radical SAM superfamily. MoaA family. Requires [4Fe-4S] cluster as cofactor.

It carries out the reaction GTP + AH2 + S-adenosyl-L-methionine = (8S)-3',8-cyclo-7,8-dihydroguanosine 5'-triphosphate + 5'-deoxyadenosine + L-methionine + A + H(+). It participates in cofactor biosynthesis; molybdopterin biosynthesis. In terms of biological role, catalyzes the cyclization of GTP to (8S)-3',8-cyclo-7,8-dihydroguanosine 5'-triphosphate. The sequence is that of Probable GTP 3',8-cyclase from Sulfurisphaera tokodaii (strain DSM 16993 / JCM 10545 / NBRC 100140 / 7) (Sulfolobus tokodaii).